The primary structure comprises 286 residues: Putative cyclin-H (286 aa).

The Cyclin N-terminal domain maps to 79 to 148 (AIIYIKRFYL…ILESLNFNLI (70 aa)). The segment at 235 to 286 (NNNNNNNNNNNNNNNNNNNNNNNNNNNNNNNNNNNNNNNNNNNNNNNNNLLL) is disordered.

It belongs to the cyclin family. Cyclin C subfamily.

Its subcellular location is the nucleus. In terms of biological role, may regulate cdk7 involved in transcription regulation and cell cycle progression. The chain is Putative cyclin-H (cycH) from Dictyostelium discoideum (Social amoeba).